The sequence spans 51 residues: Basic phospholipase A2 Bfon11 (51 aa).

Residues Y27, G29, and G31 each contribute to the Ca(2+) site. A disulfide bond links C28 and C43. H46 is a catalytic residue. Residue D47 participates in Ca(2+) binding.

This sequence belongs to the phospholipase A2 family. Group II subfamily. D49 sub-subfamily. It depends on Ca(2+) as a cofactor. Expressed by the venom gland.

The protein resides in the secreted. The catalysed reaction is a 1,2-diacyl-sn-glycero-3-phosphocholine + H2O = a 1-acyl-sn-glycero-3-phosphocholine + a fatty acid + H(+). In terms of biological role, snake venom phospholipase A2 (PLA2) that impairs hemostasis. PLA2 catalyzes the calcium-dependent hydrolysis of the 2-acyl groups in 3-sn-phosphoglycerides. The protein is Basic phospholipase A2 Bfon11 of Bothrops fonsecai (Fonseca's lancehead).